An 822-amino-acid polypeptide reads, in one-letter code: Structure-specific endonuclease subunit SLX4 (822 aa).

Disordered regions lie at residues 1–39 (MSHLDLTRHRTRSPSPSQIFGSSTTPVATNSTHSEPSAS), 73–117 (TPAV…PRPL), 277–362 (GTTN…GVSD), 390–418 (RVSSDEDKLGVPSAPASSRQSARDRTSVS), 456–507 (KSHE…SGQL), and 589–676 (KNSA…QASS). Residues 13-39 (SPSPSQIFGSSTTPVATNSTHSEPSAS) are compositionally biased toward polar residues. Over residues 280–294 (NSSSSEGSSNKSSGK) the composition is skewed to low complexity. The segment covering 310 to 320 (VTTITSLSTAQ) has biased composition (polar residues). Residues 342–354 (GKRSKSQTKKGGN) show a composition bias toward basic residues. A compositionally biased stretch (low complexity) spans 460-470 (SSTLTLPSTST). Positions 471-484 (NASNQGFSSQNTIN) are enriched in polar residues. Residues 490–506 (SQTTSTTTESTGVESGQ) show a composition bias toward low complexity. Polar residues predominate over residues 589–612 (KNSAPTSLPANNANPPDSHASGQK). Over residues 627–636 (TTKRASKAPQ) the composition is skewed to basic residues. Low complexity predominate over residues 637 to 650 (KKQSTSSTSHSAKA).

It belongs to the SLX4 family. As to quaternary structure, forms a heterodimer with SLX1. Post-translationally, phosphorylated in response to DNA damage.

The protein localises to the nucleus. Regulatory subunit of the SLX1-SLX4 structure-specific endonuclease that resolves DNA secondary structures generated during DNA repair and recombination. Has endonuclease activity towards branched DNA substrates, introducing single-strand cuts in duplex DNA close to junctions with ss-DNA. This Coccidioides immitis (strain RS) (Valley fever fungus) protein is Structure-specific endonuclease subunit SLX4.